We begin with the raw amino-acid sequence, 301 residues long: Methionine aminopeptidase (301 aa).

H65 contacts substrate. The a divalent metal cation site is built by D85, D96, and H156. H164 contributes to the substrate binding site. Residues E189 and E284 each contribute to the a divalent metal cation site.

Belongs to the peptidase M24A family. Methionine aminopeptidase archaeal type 2 subfamily. In terms of assembly, monomer. It depends on Co(2+) as a cofactor. Zn(2+) serves as cofactor. The cofactor is Mn(2+). Requires Fe(2+) as cofactor.

It catalyses the reaction Release of N-terminal amino acids, preferentially methionine, from peptides and arylamides.. Removes the N-terminal methionine from nascent proteins. The N-terminal methionine is often cleaved when the second residue in the primary sequence is small and uncharged (Met-Ala-, Cys, Gly, Pro, Ser, Thr, or Val). This is Methionine aminopeptidase from Saccharolobus solfataricus (strain ATCC 35092 / DSM 1617 / JCM 11322 / P2) (Sulfolobus solfataricus).